Consider the following 522-residue polypeptide: 2-isopropylmalate synthase (522 aa).

Residues 5-267 form the Pyruvate carboxyltransferase domain; sequence VIIFDTTLRD…ETGINAKEIH (263 aa). Positions 14, 202, 204, and 238 each coordinate Mn(2+). The regulatory domain stretch occupies residues 392–522; that stretch reads QLRQLVVQSD…MHKNRELGGV (131 aa).

It belongs to the alpha-IPM synthase/homocitrate synthase family. LeuA type 1 subfamily. As to quaternary structure, homodimer. Requires Mn(2+) as cofactor.

Its subcellular location is the cytoplasm. The catalysed reaction is 3-methyl-2-oxobutanoate + acetyl-CoA + H2O = (2S)-2-isopropylmalate + CoA + H(+). It participates in amino-acid biosynthesis; L-leucine biosynthesis; L-leucine from 3-methyl-2-oxobutanoate: step 1/4. Functionally, catalyzes the condensation of the acetyl group of acetyl-CoA with 3-methyl-2-oxobutanoate (2-ketoisovalerate) to form 3-carboxy-3-hydroxy-4-methylpentanoate (2-isopropylmalate). The chain is 2-isopropylmalate synthase from Shewanella oneidensis (strain ATCC 700550 / JCM 31522 / CIP 106686 / LMG 19005 / NCIMB 14063 / MR-1).